A 311-amino-acid chain; its full sequence is Ribosomal RNA small subunit methyltransferase H (311 aa).

S-adenosyl-L-methionine-binding positions include 34–36 (GGY), D51, F75, D93, and Q100.

It belongs to the methyltransferase superfamily. RsmH family.

The protein resides in the cytoplasm. It catalyses the reaction cytidine(1402) in 16S rRNA + S-adenosyl-L-methionine = N(4)-methylcytidine(1402) in 16S rRNA + S-adenosyl-L-homocysteine + H(+). Specifically methylates the N4 position of cytidine in position 1402 (C1402) of 16S rRNA. This is Ribosomal RNA small subunit methyltransferase H from Caulobacter vibrioides (strain ATCC 19089 / CIP 103742 / CB 15) (Caulobacter crescentus).